Reading from the N-terminus, the 1058-residue chain is Carbamoyl phosphate synthase large chain (1058 aa).

The carboxyphosphate synthetic domain stretch occupies residues 1-401 (MAKRTDIKKI…CLLKACRSLE (401 aa)). Positions 129, 169, 175, 176, 208, 210, 215, 241, 242, 243, 284, and 298 each coordinate ATP. Residues 133 to 327 (KQLMKELGEP…IAKIAAKIAV (195 aa)) enclose the ATP-grasp 1 domain. Mg(2+)-binding residues include glutamine 284, glutamate 298, and asparagine 300. Residues glutamine 284, glutamate 298, and asparagine 300 each coordinate Mn(2+). The tract at residues 402–546 (IGVDHNELKG…YSTYEWENES (145 aa)) is oligomerization domain. A carbamoyl phosphate synthetic domain region spans residues 547-929 (IKSEKESVIV…ALYKAFEASY (383 aa)). Residues 671-861 (EKALKDLGIP…MAQVATKLIL (191 aa)) form the ATP-grasp 2 domain. Residues arginine 707, serine 746, isoleucine 748, glutamate 752, glycine 777, valine 778, histidine 779, serine 780, glutamine 820, and glutamate 832 each coordinate ATP. The Mg(2+) site is built by glutamine 820, glutamate 832, and asparagine 834. Glutamine 820, glutamate 832, and asparagine 834 together coordinate Mn(2+). Positions 930 to 1058 (LHMPEYGTIV…ESRTFSIEAI (129 aa)) constitute an MGS-like domain. Positions 930–1058 (LHMPEYGTIV…ESRTFSIEAI (129 aa)) are allosteric domain.

It belongs to the CarB family. In terms of assembly, composed of two chains; the small (or glutamine) chain promotes the hydrolysis of glutamine to ammonia, which is used by the large (or ammonia) chain to synthesize carbamoyl phosphate. Tetramer of heterodimers (alpha,beta)4. Mg(2+) serves as cofactor. Requires Mn(2+) as cofactor.

The catalysed reaction is hydrogencarbonate + L-glutamine + 2 ATP + H2O = carbamoyl phosphate + L-glutamate + 2 ADP + phosphate + 2 H(+). It catalyses the reaction hydrogencarbonate + NH4(+) + 2 ATP = carbamoyl phosphate + 2 ADP + phosphate + 2 H(+). It functions in the pathway amino-acid biosynthesis; L-arginine biosynthesis; carbamoyl phosphate from bicarbonate: step 1/1. It participates in pyrimidine metabolism; UMP biosynthesis via de novo pathway; (S)-dihydroorotate from bicarbonate: step 1/3. Large subunit of the glutamine-dependent carbamoyl phosphate synthetase (CPSase). CPSase catalyzes the formation of carbamoyl phosphate from the ammonia moiety of glutamine, carbonate, and phosphate donated by ATP, constituting the first step of 2 biosynthetic pathways, one leading to arginine and/or urea and the other to pyrimidine nucleotides. The large subunit (synthetase) binds the substrates ammonia (free or transferred from glutamine from the small subunit), hydrogencarbonate and ATP and carries out an ATP-coupled ligase reaction, activating hydrogencarbonate by forming carboxy phosphate which reacts with ammonia to form carbamoyl phosphate. This is Carbamoyl phosphate synthase large chain from Streptococcus equi subsp. zooepidemicus (strain H70).